The chain runs to 1098 residues: Platelet-derived growth factor receptor beta (1098 aa).

The signal sequence occupies residues 1-31; the sequence is MGLPGVIPALVLRGQLLLSVLWLLGPQTSRG. The Extracellular portion of the chain corresponds to 32-531; it reads LVITPPGPEF…VVPHSLPFKV (500 aa). Ig-like C2-type domains lie at 33 to 119, 128 to 209, 213 to 308, 330 to 402, and 415 to 523; these read VITP…YIFV, PMDS…YSLQ, INVS…INIS, HRSR…HEDD, and PVRV…VTVV. Asn44, Asn88, and Asn102 each carry an N-linked (GlcNAc...) asparagine glycan. Cys53 and Cys99 are joined by a disulfide. An intrachain disulfide couples Cys148 to Cys189. N-linked (GlcNAc...) asparagine glycosylation occurs at Asn214. An intrachain disulfide couples Cys234 to Cys290. 7 N-linked (GlcNAc...) asparagine glycosylation sites follow: Asn291, Asn306, Asn353, Asn370, Asn444, Asn467, and Asn478. The cysteines at positions 435 and 507 are disulfide-linked. Residues 532–552 form a helical membrane-spanning segment; sequence VVISAILALVVLTVISLIILI. Residues 553–1098 are Cytoplasmic-facing; the sequence is MLWQKKPRYE…PLAEAEDSFL (546 aa). Phosphotyrosine; by autocatalysis is present on residues Tyr561, Tyr578, and Tyr580. The Protein kinase domain occupies 599-961; the sequence is LVLGRTLGSG…QLVLLLERLL (363 aa). Residues 605–613 and Lys633 contribute to the ATP site; that span reads LGSGAFGQV. Residue Tyr685 is modified to Phosphotyrosine; by ABL1 and ABL2. Tyr715, Tyr739, Tyr750, Tyr762, Tyr770, Tyr774, and Tyr777 each carry phosphotyrosine; by autocatalysis. The Proton acceptor role is filled by Asp825. Tyr856 carries the post-translational modification Phosphotyrosine; by autocatalysis. Phosphotyrosine; by ABL1 and ABL2 is present on residues Tyr933 and Tyr969. 2 positions are modified to phosphotyrosine; by autocatalysis: Tyr1008 and Tyr1020. The tract at residues 1016–1098 is disordered; it reads SDNDYIIPLP…PLAEAEDSFL (83 aa). Positions 1042–1059 are enriched in polar residues; it reads SLASSTLNEVNTSSTISC. Residues 1062-1082 show a composition bias toward low complexity; that stretch reads PLELQEEPQQAEPEAQLEQPQ.

The protein belongs to the protein kinase superfamily. Tyr protein kinase family. CSF-1/PDGF receptor subfamily. As to quaternary structure, interacts with homodimeric PDGFB and PDGFD, and with heterodimers formed by PDGFA and PDGFB. May also interact with homodimeric PDGFC. Monomer in the absence of bound ligand. Interaction with homodimeric PDGFB, heterodimers formed by PDGFA and PDGFB or homodimeric PDGFD, leads to receptor dimerization, where both PDGFRA homodimers and heterodimers with PDGFRB are observed. Interacts with SH2B2/APS. Interacts directly (tyrosine phosphorylated) with SHB. Interacts (tyrosine phosphorylated) with PIK3R1 and RASA1. Interacts (tyrosine phosphorylated) with CBL. Interacts (tyrosine phosphorylated) with SRC and SRC family kinases. Interacts (tyrosine phosphorylated) with PIK3C2B, maybe indirectly. Interacts (tyrosine phosphorylated) with SHC1, GRB7, GRB10 and NCK1. Interaction with GRB2 is mediated by SHC1. Interacts (via C-terminus) with NHERF1. Post-translationally, autophosphorylated on tyrosine residues upon ligand binding. Autophosphorylation occurs in trans, i.e. one subunit of the dimeric receptor phosphorylates tyrosine residues on the other subunit. Phosphorylation at Tyr-578, and to a lesser degree, Tyr-580 is important for interaction with SRC. Phosphorylation at Tyr-715 is important for interaction with GRB2. Phosphorylation at Tyr-739 and Tyr-750 is important for interaction with PIK3R1. Phosphorylation at Tyr-750 is important for interaction with NCK1. Phosphorylation at Tyr-770 and Tyr-856 is important for interaction with RASA1/GAP. Phosphorylation at Tyr-856 is important for efficient phosphorylation of PLCG1 and PTPN11, resulting in increased phosphorylation of AKT1, MAPK1/ERK2 and/or MAPK3/ERK1, PDCD6IP/ALIX and STAM, and in increased cell proliferation. Phosphorylation at Tyr-1008 is important for interaction with PTPN11. Phosphorylation at Tyr-1008 and Tyr-1020 is important for interaction with PLCG1. Dephosphorylated by PTPRJ at Tyr-750, Tyr-856, Tyr-1008 and Tyr-1020. Dephosphorylated by PTPN2 at Tyr-578 and Tyr-1020. In terms of processing, N-glycosylated. Ubiquitinated. After autophosphorylation, the receptor is polyubiquitinated, leading to its degradation. In terms of tissue distribution, weakly expressed in glomerular mesangial cells and interstitial cells. Up-regulated in areas of renal fibrosis. In mice with unilateral ureteral obstruction, increased expression in interstitial cells at day 4 and expression is markedly elevated at day 7 and is maximal at day 14.

Its subcellular location is the cell membrane. It is found in the cytoplasmic vesicle. The protein localises to the lysosome lumen. The enzyme catalyses L-tyrosyl-[protein] + ATP = O-phospho-L-tyrosyl-[protein] + ADP + H(+). With respect to regulation, present in an inactive conformation in the absence of bound ligand. Binding of PDGFB and/or PDGFD leads to dimerization and activation by autophosphorylation on tyrosine residues. In terms of biological role, tyrosine-protein kinase that acts as a cell-surface receptor for homodimeric PDGFB and PDGFD and for heterodimers formed by PDGFA and PDGFB, and plays an essential role in the regulation of embryonic development, cell proliferation, survival, differentiation, chemotaxis and migration. Plays an essential role in blood vessel development by promoting proliferation, migration and recruitment of pericytes and smooth muscle cells to endothelial cells. Plays a role in the migration of vascular smooth muscle cells and the formation of neointima at vascular injury sites. Required for normal development of the cardiovascular system. Required for normal recruitment of pericytes (mesangial cells) in the kidney glomerulus, and for normal formation of a branched network of capillaries in kidney glomeruli. Promotes rearrangement of the actin cytoskeleton and the formation of membrane ruffles. Binding of its cognate ligands - homodimeric PDGFB, heterodimers formed by PDGFA and PDGFB or homodimeric PDGFD -leads to the activation of several signaling cascades; the response depends on the nature of the bound ligand and is modulated by the formation of heterodimers between PDGFRA and PDGFRB. Phosphorylates PLCG1, PIK3R1, PTPN11, RASA1/GAP, CBL, SHC1 and NCK1. Activation of PLCG1 leads to the production of the cellular signaling molecules diacylglycerol and inositol 1,4,5-trisphosphate, mobilization of cytosolic Ca(2+) and the activation of protein kinase C. Phosphorylation of PIK3R1, the regulatory subunit of phosphatidylinositol 3-kinase, leads to the activation of the AKT1 signaling pathway. Phosphorylation of SHC1, or of the C-terminus of PTPN11, creates a binding site for GRB2, resulting in the activation of HRAS, RAF1 and down-stream MAP kinases, including MAPK1/ERK2 and/or MAPK3/ERK1. Promotes phosphorylation and activation of SRC family kinases. Promotes phosphorylation of PDCD6IP/ALIX and STAM. Receptor signaling is down-regulated by protein phosphatases that dephosphorylate the receptor and its down-stream effectors, and by rapid internalization of the activated receptor. This chain is Platelet-derived growth factor receptor beta (Pdgfrb), found in Mus musculus (Mouse).